Reading from the N-terminus, the 113-residue chain is Protein crumbs homolog 3 (113 aa).

Residues 1–24 form the signal peptide; it reads MATPGLGVLLAFGLPMLPSGWSLT. The tract at residues 23–44 is disordered; that stretch reads LTAPDPFTNSTTQPPGDESNGG. Topologically, residues 25 to 49 are extracellular; sequence APDPFTNSTTQPPGDESNGGLSSGA. The N-linked (GlcNAc...) asparagine glycan is linked to asparagine 31. A helical transmembrane segment spans residues 50 to 70; the sequence is IVAITVVFSILGVLLIAVGLF. At 71-113 the chain is on the cytoplasmic side; sequence LLMRKLREKRQTEGTYRPSSEEQVGARAPPPPNLKLPPEERLI. The tract at residues 77-113 is interaction with EPB41L5; the sequence is REKRQTEGTYRPSSEEQVGARAPPPPNLKLPPEERLI. The disordered stretch occupies residues 80–113; the sequence is RQTEGTYRPSSEEQVGARAPPPPNLKLPPEERLI. Residues 83 to 92 show a composition bias toward polar residues; that stretch reads EGTYRPSSEE. The PDZ-binding motif lies at 110 to 113; the sequence is ERLI.

In terms of assembly, component of a complex composed of CRB3, PALS1 and PATJ. Interacts (via C-terminus) with PALS1 (via PDZ domain). Interacts with PARD6A. Interacts (via intracellular domain) with EPB41L5. Interacts with WDR83. As to expression, expressed in the apical renal tubules (at protein level). Expressed in the retinal pigment epithelium.

The protein localises to the apical cell membrane. The protein resides in the cell junction. It is found in the tight junction. Involved in the establishment of cell polarity in mammalian epithelial cells. Regulates the morphogenesis of tight junctions. Involved in promoting phosphorylation and cytoplasmic retention of transcriptional coactivators YAP1 and WWTR1/TAZ which leads to suppression of TGFB1-dependent transcription of target genes such as CCN2/CTGF, SERPINE1/PAI1, SNAI1/SNAIL1 and SMAD7. This Mus musculus (Mouse) protein is Protein crumbs homolog 3 (Crb3).